A 104-amino-acid polypeptide reads, in one-letter code: U20-lycotoxin-Ls1a (104 aa).

Positions methionine 1 to alanine 30 are cleaved as a signal peptide. The WAP domain maps to glycine 31–serine 76. Intrachain disulfides connect cysteine 34–cysteine 64, cysteine 42–cysteine 68, cysteine 51–cysteine 63, cysteine 52–cysteine 90, and cysteine 57–cysteine 72.

Belongs to the venom protein 11 family. 02 (wap-2) subfamily. In terms of processing, contains 5 disulfide bonds. As to expression, expressed by the venom gland.

It is found in the secreted. Has antibacterial activity. The sequence is that of U20-lycotoxin-Ls1a from Lycosa singoriensis (Wolf spider).